Consider the following 642-residue polypeptide: Threonine--tRNA ligase (642 aa).

Residues 1 to 61 form the TGS domain; it reads MPVITLPDGS…ETDAELSIIT (61 aa). A catalytic region spans residues 243 to 534; it reads DHRKIGKQLD…LIEEYAGRFP (292 aa). Zn(2+) contacts are provided by C334, H385, and H511.

It belongs to the class-II aminoacyl-tRNA synthetase family. In terms of assembly, homodimer. Zn(2+) is required as a cofactor.

The protein resides in the cytoplasm. It catalyses the reaction tRNA(Thr) + L-threonine + ATP = L-threonyl-tRNA(Thr) + AMP + diphosphate + H(+). In terms of biological role, catalyzes the attachment of threonine to tRNA(Thr) in a two-step reaction: L-threonine is first activated by ATP to form Thr-AMP and then transferred to the acceptor end of tRNA(Thr). Also edits incorrectly charged L-seryl-tRNA(Thr). This chain is Threonine--tRNA ligase, found in Shewanella putrefaciens (strain CN-32 / ATCC BAA-453).